The following is a 527-amino-acid chain: EGF domain-specific O-linked N-acetylglucosamine transferase (527 aa).

The N-terminal stretch at 1-17 is a signal peptide; that stretch reads MLKLLVLGVLLHDVSLS. Residues 295–297 carry the Required for optimal activity motif; the sequence is DYD. Asn-354 carries an N-linked (GlcNAc...) asparagine glycan. The Prevents secretion from ER signature appears at 524 to 527; the sequence is RDEL.

It belongs to the glycosyltransferase 61 family.

The protein resides in the endoplasmic reticulum lumen. It carries out the reaction L-seryl-[protein] + UDP-N-acetyl-alpha-D-glucosamine = 3-O-(N-acetyl-beta-D-glucosaminyl)-L-seryl-[protein] + UDP + H(+). The enzyme catalyses L-threonyl-[protein] + UDP-N-acetyl-alpha-D-glucosamine = 3-O-(N-acetyl-beta-D-glucosaminyl)-L-threonyl-[protein] + UDP + H(+). Functionally, catalyzes the transfer of a single N-acetylglucosamine from UDP-GlcNAc to a serine or threonine residue in extracellular proteins resulting in their modification with a beta-linked N-acetylglucosamine (O-GlcNAc). Specifically glycosylates the Thr residue located between the fifth and sixth conserved cysteines of folded EGF-like domains. The chain is EGF domain-specific O-linked N-acetylglucosamine transferase (EOGT) from Canis lupus familiaris (Dog).